A 425-amino-acid polypeptide reads, in one-letter code: Protein let-756 (425 aa).

Disordered regions lie at residues 277–298 (LEEK…LRKE) and 314–425 (EEEL…QRYP). Positions 281-291 (KRRREKKKRRR) are enriched in basic residues. Polar residues predominate over residues 329-340 (ASTQTRYNRPQN). The segment covering 378–389 (HNSHHHHHHHPR) has biased composition (basic residues). A compositionally biased stretch (polar residues) spans 395–425 (DPQQRHQSQQHYLAQTVSNPNRQNVNYQRYP).

The protein belongs to the heparin-binding growth factors family. In terms of assembly, interacts with pal-1. Expressed in pharynx, CAN neuron and body wall muscles.

The protein resides in the nucleus. Its subcellular location is the membrane. Required for larval development. Probably by binding receptor egl-15, negatively regulates membrane protrusion from body wall muscles during larval development. This Caenorhabditis elegans protein is Protein let-756 (let-756).